The following is a 563-amino-acid chain: Ataxin-10 homolog (563 aa).

Threonine 433 is subject to Phosphothreonine. A disordered region spans residues 544–563 (VSKEEDPGNENSEIISIDED). Phosphoserine is present on serine 559.

It belongs to the ataxin-10 family.

The protein localises to the cytoplasm. In terms of biological role, may play a role in the regulation of cytokinesis. The chain is Ataxin-10 homolog (CTR86) from Saccharomyces cerevisiae (strain ATCC 204508 / S288c) (Baker's yeast).